The primary structure comprises 267 residues: MSAGSFSTEAAKFSFSPILNKTFGFLTNRDTRELLMKWSMNGRITAQAFRYDECFQPYQKNDFVWAFFQDPDVLSHLKIVSENSGQWVTLGTKVKKVDVQEILCSQLSMSLFDCLYSEGIVRESGHICKCLDEYLDDFTISDELRKVLLLDDCEKHDVFSQSDREQFLFLLFKHLCLGGAICQFEDTIGPYLETTKSIYKDLLSVQKDPETKQIRIISTVFKVSAYDENGMCYPSGRPHQQTFAYLIVDPLKRHVYVLYHCFGGGAF.

Belongs to the CFAP300 family.

It is found in the cytoplasm. The protein localises to the cytoskeleton. It localises to the cilium axoneme. In terms of biological role, cilium- and flagellum-specific protein that plays a role in axonemal structure organization and motility. May play a role in outer and inner dynein arm assembly. This chain is Cilia- and flagella-associated protein 300, found in Xenopus tropicalis (Western clawed frog).